The following is a 107-amino-acid chain: UPF0060 membrane protein M446_5886 (107 aa).

4 consecutive transmembrane segments (helical) span residues 4-24 (LLAY…IWAW), 31-51 (PLWL…LTRV), 59-79 (AYAA…WAAE), and 85-105 (RWDL…LLGP).

The protein belongs to the UPF0060 family.

Its subcellular location is the cell inner membrane. The chain is UPF0060 membrane protein M446_5886 from Methylobacterium sp. (strain 4-46).